The sequence spans 481 residues: MAKITQTMMAQVLSLVGGSGNVAKCGNCMTRLRLTLNNSALADHAALKKISGVMGVVESDAQLQIILGPGKAQTAADMMNALIESGDNVAPAVSEADLSTIAAQQKKQMKSKQTSAVQRFLSKFATIFTPLIPGFIAAGLLLGIATLLEQIYVVGQTPSEFMLDLVAYLKVFGKGLFAFLSILIGYNAQQAFGGSGVNGAILASLFVLGYDPEATKGIYSGMSEFFGFAIDPRGNIIGVLLAAILGAQVERKVREYMPDDLDMILTSVVTLLIMGAVTFLIIMPIGGELFKGMSWLFLNLNDNPLGAAILAGLFLISVVFGIHQGFVPVYFALMEAQGFNSLFPILAMAGAGQVGASLALYARAKKETTIRTQIKGAIIPGILGIGEPLIYGVTLPRVKPFVTACIGGAAGGFFIGLISYLGLPVGLNTVFGPSGVVAIPLMTSADGIFAGMAVFVGGLLISYTVGFAATYFFGCKDVDLS.

The region spanning 1–89 (MAKITQTMMA…NALIESGDNV (89 aa)) is the PTS EIIB type-1 domain. Cys-28 serves as the catalytic Phosphocysteine intermediate; for EIIB activity. Residues 122–481 (SKFATIFTPL…FFGCKDVDLS (360 aa)) form the PTS EIIC type-1 domain. Helical transmembrane passes span 124-144 (FATI…LLGI), 165-185 (LVAY…ILIG), 190-210 (QAFG…VLGY), 225-245 (FFGF…AAIL), 263-283 (MILT…LIIM), 307-327 (AAIL…QGFV), 342-362 (LFPI…ALYA), 376-396 (GAII…VTLP), 406-426 (IGGA…LPVG), and 448-468 (IFAG…VGFA).

It localises to the cell inner membrane. The catalysed reaction is N-acetyl-beta-D-muramate(out) + N(pros)-phospho-L-histidyl-[protein] = N-acetyl-beta-D-muramate 6-phosphate(in) + L-histidyl-[protein]. Functionally, the phosphoenolpyruvate-dependent sugar phosphotransferase system (sugar PTS), a major carbohydrate active transport system, catalyzes the phosphorylation of incoming sugar substrates concomitantly with their translocation across the cell membrane. This system is involved in N-acetylmuramic acid (MurNAc) transport, yielding cytoplasmic MurNAc-6-P. Is also able to take up anhydro-N-acetylmuramic acid (anhMurNAc), but cannot phosphorylate the carbon 6, probably because of the 1,6-anhydro ring. The chain is PTS system N-acetylmuramic acid-specific EIIBC component (murP) from Vibrio cholerae serotype O1 (strain ATCC 39315 / El Tor Inaba N16961).